Reading from the N-terminus, the 353-residue chain is 26S proteasome non-ATPase regulatory subunit 8 (353 aa).

Positions 1 to 25 are disordered; the sequence is MFIKGRAAKTPRGEPRRSSRGGRKL. Residues 165-334 enclose the PCI domain; it reads PSFERYMAQL…QQKPEDSTIP (170 aa). K300 participates in a covalent cross-link: Glycyl lysine isopeptide (Lys-Gly) (interchain with G-Cter in SUMO2).

It belongs to the proteasome subunit S14 family. In terms of assembly, component of the 19S proteasome regulatory particle complex. The 26S proteasome consists of a 20S core particle (CP) and two 19S regulatory subunits (RP). The regulatory particle is made of a lid composed of 9 subunits including PSMD8, a base containing 6 ATPases and few additional components. Interacts with DDI2. Interacts with TASOR. Expressed in the Sertoli cells of the testis.

In terms of biological role, component of the 26S proteasome, a multiprotein complex involved in the ATP-dependent degradation of ubiquitinated proteins. This complex plays a key role in the maintenance of protein homeostasis by removing misfolded or damaged proteins, which could impair cellular functions, and by removing proteins whose functions are no longer required. Therefore, the proteasome participates in numerous cellular processes, including cell cycle progression, apoptosis, or DNA damage repair. The sequence is that of 26S proteasome non-ATPase regulatory subunit 8 (Psmd8) from Mus musculus (Mouse).